The primary structure comprises 350 residues: Inositol 2-dehydrogenase/D-chiro-inositol 3-dehydrogenase (350 aa).

Belongs to the Gfo/Idh/MocA family. Homotetramer.

The enzyme catalyses myo-inositol + NAD(+) = scyllo-inosose + NADH + H(+). The catalysed reaction is 1D-chiro-inositol + NAD(+) = scyllo-inosine + NADH + H(+). It participates in polyol metabolism; myo-inositol degradation into acetyl-CoA; acetyl-CoA from myo-inositol: step 1/7. Functionally, involved in the oxidation of myo-inositol (MI) and D-chiro-inositol (DCI) to 2-keto-myo-inositol (2KMI or 2-inosose) and 1-keto-D-chiro-inositol (1KDCI), respectively. This Lactiplantibacillus plantarum (strain ATCC BAA-793 / NCIMB 8826 / WCFS1) (Lactobacillus plantarum) protein is Inositol 2-dehydrogenase/D-chiro-inositol 3-dehydrogenase.